Reading from the N-terminus, the 63-residue chain is uncharacterized protein (63 aa).

An N-terminal signal peptide occupies residues 1-18 (MLNSEHFNLIQRALDATA).

This is an uncharacterized protein from Bacillus subtilis (strain 168).